A 329-amino-acid polypeptide reads, in one-letter code: T-cell acute lymphocytic leukemia protein 1 homolog (329 aa).

Disordered regions lie at residues M1–P28, E40–D78, and T91–A125. At S12 the chain carries Phosphoserine. The span at S58 to A70 shows a compositional bias: gly residues. A compositionally biased stretch (pro residues) spans P96–A106. S122 is subject to Phosphoserine; by MAPK. Phosphoserine is present on S172. The 53-residue stretch at V187 to L239 folds into the bHLH domain. Residues E247–R329 are disordered. Residues G263–I273 are compositionally biased toward gly residues. A compositionally biased stretch (low complexity) spans P317–R329.

In terms of assembly, efficient DNA binding requires dimerization with another bHLH protein. Forms heterodimers with TCF3. Binds to the LIM domain containing protein LMO2 and to DRG1. Can assemble in a complex with LDB1 and LMO2. Component of a TAL-1 complex composed at least of CBFA2T3, LDB1, TAL1 and TCF3. Interacts with SBNO2; this interaction inhibits TAL1 occupancy of the DCSTAMP promoter, leading to the activation of the DCSTAMP promoter by the transcription factor MITF. Post-translationally, phosphorylated on serine residues. Phosphorylation of Ser-122 by MAPK is strongly stimulated by hypoxia. In terms of processing, ubiquitinated; subsequent to hypoxia-dependent phosphorylation of Ser-122, ubiquitination targets the protein for rapid degradation via the ubiquitin system. This process may be characteristic for microvascular endothelial cells, since it could not be observed in large vessel endothelial cells. As to expression, erythroid and myeloid cells.

It localises to the nucleus. In terms of biological role, implicated in the genesis of hemopoietic malignancies. It may play an important role in hemopoietic differentiation. Serves as a positive regulator of erythroid differentiation. This is T-cell acute lymphocytic leukemia protein 1 homolog (Tal1) from Mus musculus (Mouse).